The primary structure comprises 713 residues: Endopolyphosphatase (713 aa).

Topologically, residues 1 to 19 (MSVLIDEKSHRSSGSTRSR) are cytoplasmic. The chain crosses the membrane as a helical; Signal-anchor for type II membrane protein span at residues 20–40 (IVVTVVGVLLMVSGLAVMLGH). Residues 41 to 713 (QSGSANEALG…SSEYENMGMG (673 aa)) lie on the Vacuolar side of the membrane. Residues 399 to 418 (SDDDDNSDSDSDDDDEDTSL) show a composition bias toward acidic residues. A disordered region spans residues 399–430 (SDDDDNSDSDSDDDDEDTSLEESYSNFNSPIL). N-linked (GlcNAc...) asparagine glycans are attached at residues N507 and N645. The segment covering 640–659 (VKEKKNKSNKKSKKKKKNKD) has biased composition (basic residues). The tract at residues 640-684 (VKEKKNKSNKKSKKKKKNKDKRLLENSEPLKQDGSKDSRLEQDRV) is disordered. The segment covering 660–683 (KRLLENSEPLKQDGSKDSRLEQDR) has biased composition (basic and acidic residues).

The protein belongs to the endopolyphosphatase PPN1 family. A divalent metal cation serves as cofactor. Post-translationally, processing by proteases in the vacuole may be required for activation.

The protein localises to the vacuole membrane. It catalyses the reaction [phosphate](n+1) + n H2O = (n+1) phosphate + n H(+). Functionally, catalyzes the hydrolysis of inorganic polyphosphate (polyP) chains of many hundreds of phosphate residues into shorter lengths. The protein is Endopolyphosphatase (PPN1) of Debaryomyces hansenii (strain ATCC 36239 / CBS 767 / BCRC 21394 / JCM 1990 / NBRC 0083 / IGC 2968) (Yeast).